A 474-amino-acid polypeptide reads, in one-letter code: Glycogen synthase (474 aa).

K12 contacts ADP-alpha-D-glucose.

It belongs to the glycosyltransferase 1 family. Bacterial/plant glycogen synthase subfamily.

The enzyme catalyses [(1-&gt;4)-alpha-D-glucosyl](n) + ADP-alpha-D-glucose = [(1-&gt;4)-alpha-D-glucosyl](n+1) + ADP + H(+). The protein operates within glycan biosynthesis; glycogen biosynthesis. Functionally, synthesizes alpha-1,4-glucan chains using ADP-glucose. The polypeptide is Glycogen synthase (Xanthomonas axonopodis pv. citri (strain 306)).